A 1215-amino-acid polypeptide reads, in one-letter code: MVDVNRFKSMQITLASPNKVRSWSYGEVKKPETINYRTLKPEREGLFDEVIFGPTKDWECACGKYKRIRYKGIVCDRCGVEVTRAKVRRERMGHIELKAPVSHIWYFKGIPSRMGLTLDMSPRALEEVIYFAAYVVIDPKDTPLEHKSIMTEREYRERLREYGAGSFVAKMGAEAIQDLLKQVDLEAEIAVLKEELKTASGQKRIKAVRRLDVLDAFYKSGNKPEWMVLNILPVIPPDLRPMVQLDGGRFAASDLNDLYRRVINRNNRLARLLELNAPGIIVQNEKRMLQEAVDALIDNGRRGRPITGPGSRPLKSLSHMLKGKQGRFRQNLLGKRVDFSGRSVIAVGPTLKMYQCGVPREMAIELFKPFVMREIVARDIVQNVKAAKRLVERGDERIWDILEEVIKEHPVLLNRAPTLHRLGIQAFEPVLIDGKALRLHPLVCEAYNADFDGDQMAIHVPLSEEAQAEARILMLAAEHILNPKDGKPVVTPSQDMVLGNYYLTMEEAGREGEGMIFKDMDEAVMALRNGYVHLHTRVGIATDSLNKPWTEDQKHKILITTVGKILFNAIMPEELPYLQEPTNANLTEGVPAKYFLESGQDIKEVIEQLEINVPFKKKNLGNIIAEIFKRFRTTETSALLDRLKNLGYHHSTLAGLTVGIADIPVVEDKAEIIEESHKRVEQITKQFRRGMITDDERYNAVTAEWRAAREKLEKRLVANQDPKNPIVMMMDSGARGNISNFSQLAGMRGLMAAPNGRIMELPILSNFREGLSVLEMFFSTHGARKGMTDTALKTADSGYLTRRLVDVAQDVIIREDDCGTDRGLLITSITEGKEMIESLEERLNGRYTKKTVKHPETGAVIIGPNELITEDKAREIVNAGVEEVTIRSVFTCNTRHGVCRHCYGINLATGDAVEVGEAVGTIAAQSIGEPGTQLTMRTFHTGGVASNTDITQGLPRVQEIFEARNPKGEAVITEVKGEVTAIEEDASTRTKKVFVKGQTGEGEYVVPFTARMKVEVGDQVSRGAALTEGSIQPKHLLAVRDVLSVETYLLAEVQKVYRSQGVEIGDKHIEVMVRQMIRKVRVMDPGDTDLLMGTLMDITDFTDANRDVVISGGVPATARPVLMGITKASLETNSFLSAASFQETTRVLTDAAIRGKKDHLLGLKENVIIGKIIPAGTGMARYRNLEPQAVNEVEIIDEVTELPDGFETEENIVLK.

Zn(2+) contacts are provided by cysteine 60, cysteine 62, cysteine 75, and cysteine 78. Positions 450, 452, and 454 each coordinate Mg(2+). Residues cysteine 818, cysteine 892, cysteine 899, and cysteine 902 each coordinate Zn(2+).

The protein belongs to the RNA polymerase beta' chain family. In terms of assembly, the RNAP catalytic core consists of 2 alpha, 1 beta, 1 beta' and 1 omega subunit. When a sigma factor is associated with the core the holoenzyme is formed, which can initiate transcription. It depends on Mg(2+) as a cofactor. Zn(2+) serves as cofactor.

The enzyme catalyses RNA(n) + a ribonucleoside 5'-triphosphate = RNA(n+1) + diphosphate. DNA-dependent RNA polymerase catalyzes the transcription of DNA into RNA using the four ribonucleoside triphosphates as substrates. The sequence is that of DNA-directed RNA polymerase subunit beta' from Streptococcus sanguinis (strain SK36).